The sequence spans 101 residues: Ubiquitin-related modifier 1 (101 aa).

Gly-101 is subject to 1-thioglycine. Residue Gly-101 forms a Glycyl lysine isopeptide (Gly-Lys) (interchain with K-? in acceptor proteins) linkage.

Belongs to the URM1 family. In terms of processing, C-terminal thiocarboxylation occurs in 2 steps, it is first acyl-adenylated (-COAMP) via the hesA/moeB/thiF part of UBA4, then thiocarboxylated (-COSH) via the rhodanese domain of UBA4.

Its subcellular location is the cytoplasm. It participates in tRNA modification; 5-methoxycarbonylmethyl-2-thiouridine-tRNA biosynthesis. Its function is as follows. Acts as a sulfur carrier required for 2-thiolation of mcm(5)S(2)U at tRNA wobble positions of cytosolic tRNA(Lys), tRNA(Glu) and tRNA(Gln). Serves as sulfur donor in tRNA 2-thiolation reaction by being thiocarboxylated (-COSH) at its C-terminus by the MOCS3 homolog UBA4. The sulfur is then transferred to tRNA to form 2-thiolation of mcm(5)S(2)U. Prior mcm(5) tRNA modification by the elongator complex is required for 2-thiolation. Also acts as a ubiquitin-like protein (UBL) that is covalently conjugated via an isopeptide bond to lysine residues of target proteins such as AHP1. The thiocarboxylated form serves as substrate for conjugation and oxidative stress specifically induces the formation of UBL-protein conjugates. The polypeptide is Ubiquitin-related modifier 1 (Scheffersomyces stipitis (strain ATCC 58785 / CBS 6054 / NBRC 10063 / NRRL Y-11545) (Yeast)).